The sequence spans 490 residues: MENGSGKVLKPMDSEQLREYGHLMVDFIADYYKTIEDFPVLSQVQPGYLHKLLPDSAPDHPETLDQVLDDVRAKILPGVTHWQSPSFFAYYPSNSSVAGFLGEMLSAGLGIVGFSWVTSPAATELEMIVLDWVAKLLNLPEQFMSKGNGGGVIQGSASEAVLVVLIAARDKVLRSVGKNALEKLVVYSSDQTHSALQKACQIAGIHPENCRVLTTDSSTNYALRPESLQEAVSRDLEAGLIPFFLCANVGTTSSTAVDPLAALGKIANSNGIWFHVDAAYAGSACICPEYRQYIDGVETADSFNMNAHKWFLTNFDCSLLWVKDQDSLTLALSTNPEFLKNKASQANLVVDYKDWQIPLGRRFRSLKLWMVLRLYGSETLKSYIRNHIKLAKEFEQLVSQDPNFEIVTPRIFALVCFRLVPVKDEEKKCNNRNRELLDAVNSSGKLFMSHTALSGKIVLRCAIGAPLTEEKHVKEAWKIIQEEASYLLHK.

L-phenylalanine-binding residues include proline 92, histidine 193, and histidine 308. The residue at position 309 (lysine 309) is an N6-(pyridoxal phosphate)lysine. Position 338 (phenylalanine 338) interacts with L-phenylalanine.

Belongs to the group II decarboxylase family. Homodimer. Pyridoxal 5'-phosphate serves as cofactor. In terms of tissue distribution, expressed in roots, rosette leaves, stems, cauline leaves and flowers.

It carries out the reaction L-phenylalanine + O2 + H2O + H(+) = 2-phenylacetaldehyde + H2O2 + NH4(+) + CO2. The enzyme catalyses L-dopa + O2 + H2O + H(+) = 3,4-dihydroxyphenylacetaldehyde + H2O2 + NH4(+) + CO2. Functionally, bifunctional enzyme that catalyzes the decarboxylation of L-phenylalanine to 2-phenylethylamine, which is then oxidized to form 2-phenylacetaldehyde, a constituent of floral scent. 2-phenylacetaldehyde is a precursor of 2-phenylethanol, another constituent of floral scent. Catalyzes both the decarboxylation and deamination of L-dopa to 3,4-dihydroxylphenylacetaldehyde (DHPAA). This chain is Phenylacetaldehyde synthase, found in Arabidopsis thaliana (Mouse-ear cress).